Here is a 662-residue protein sequence, read N- to C-terminus: A-kinase anchor protein 10, mitochondrial (662 aa).

A mitochondrion-targeting transit peptide spans 1–28; that stretch reads MRGAGPSPRHSPRALRPDPGPAMSFFRR. Disordered stretches follow at residues 1–55, 178–205, and 242–280; these read MRGA…SPQK, KQSS…ALDR, and GHSA…NSCS. A compositionally biased stretch (basic and acidic residues) spans 32 to 43; sequence GKEQEKTLDVKS. Ser52 and Ser189 each carry phosphoserine. RGS domains are found at residues 125 to 369 and 379 to 505; these read TLEQ…CKYQ and YLAD…YKYL. Over residues 256–280 the composition is skewed to polar residues; that stretch reads GSHQIPTDSQDSSSRLAVGSRNSCS. At Ser281 the chain carries Phosphoserine. A PKA-RII subunit binding region spans residues 634 to 647; sequence LAWKIAKMIVSDVM.

Highly expressed in testis, kidney and lung, followed by brain, skeletal muscle, liver, spleen and heart. Also expressed in brown adipose tissue and pancreas.

The protein localises to the mitochondrion. Its subcellular location is the membrane. The protein resides in the cytoplasm. In terms of biological role, differentially targeted protein that binds to type I and II regulatory subunits of protein kinase A and anchors them to the mitochondria or the plasma membrane. Although the physiological relevance between PKA and AKAPS with mitochondria is not fully understood, one idea is that BAD, a proapoptotic member, is phosphorylated and inactivated by mitochondria-anchored PKA. It cannot be excluded too that it may facilitate PKA as well as G protein signal transduction, by acting as an adapter for assembling multiprotein complexes. With its RGS domain, it could lead to the interaction to G-alpha proteins, providing a link between the signaling machinery and the downstream kinase. The sequence is that of A-kinase anchor protein 10, mitochondrial (Akap10) from Mus musculus (Mouse).